Here is a 296-residue protein sequence, read N- to C-terminus: Acetylglutamate kinase (296 aa).

Substrate contacts are provided by residues 69–70, arginine 91, and asparagine 193; that span reads GG.

This sequence belongs to the acetylglutamate kinase family. ArgB subfamily.

Its subcellular location is the cytoplasm. It catalyses the reaction N-acetyl-L-glutamate + ATP = N-acetyl-L-glutamyl 5-phosphate + ADP. The protein operates within amino-acid biosynthesis; L-arginine biosynthesis; N(2)-acetyl-L-ornithine from L-glutamate: step 2/4. In terms of biological role, catalyzes the ATP-dependent phosphorylation of N-acetyl-L-glutamate. This is Acetylglutamate kinase from Delftia acidovorans (strain DSM 14801 / SPH-1).